A 93-amino-acid chain; its full sequence is Putative pterin-4-alpha-carbinolamine dehydratase (93 aa).

This sequence belongs to the pterin-4-alpha-carbinolamine dehydratase family.

It catalyses the reaction (4aS,6R)-4a-hydroxy-L-erythro-5,6,7,8-tetrahydrobiopterin = (6R)-L-erythro-6,7-dihydrobiopterin + H2O. This Thermomicrobium roseum (strain ATCC 27502 / DSM 5159 / P-2) protein is Putative pterin-4-alpha-carbinolamine dehydratase.